The following is a 183-amino-acid chain: dTTP/UTP pyrophosphatase (183 aa).

Asp64 acts as the Proton acceptor in catalysis.

Belongs to the Maf family. YhdE subfamily. A divalent metal cation is required as a cofactor.

It is found in the cytoplasm. It catalyses the reaction dTTP + H2O = dTMP + diphosphate + H(+). The catalysed reaction is UTP + H2O = UMP + diphosphate + H(+). Functionally, nucleoside triphosphate pyrophosphatase that hydrolyzes dTTP and UTP. May have a dual role in cell division arrest and in preventing the incorporation of modified nucleotides into cellular nucleic acids. This is dTTP/UTP pyrophosphatase from Acinetobacter baylyi (strain ATCC 33305 / BD413 / ADP1).